We begin with the raw amino-acid sequence, 134 residues long: Replication enhancer protein (134 aa).

It belongs to the geminiviridae replication enhancer protein family. As to quaternary structure, homooligomer. Interacts with the replication-associated protein (REP). Interacts with host proliferating cell nuclear antigen (PCNA). Interacts with host retinoblastoma-related protein 1 (RBR1), and may thereby deregulate the host cell cycle. Oligomerization and interaction with PCNA are necessary for optimal replication enhancement.

In terms of biological role, increases viral DNA accumulation. Enhances infectivity and symptom expression. This chain is Replication enhancer protein, found in Mungbean yellow mosaic virus (strain Vigna) (MYMV).